Consider the following 326-residue polypeptide: N-acetyl-gamma-glutamyl-phosphate reductase (326 aa).

The active site involves Cys-155.

Belongs to the NAGSA dehydrogenase family. Type 1 subfamily.

It is found in the cytoplasm. It carries out the reaction N-acetyl-L-glutamate 5-semialdehyde + phosphate + NADP(+) = N-acetyl-L-glutamyl 5-phosphate + NADPH + H(+). Its pathway is amino-acid biosynthesis; L-arginine biosynthesis; N(2)-acetyl-L-ornithine from L-glutamate: step 3/4. Catalyzes the NADPH-dependent reduction of N-acetyl-5-glutamyl phosphate to yield N-acetyl-L-glutamate 5-semialdehyde. This chain is N-acetyl-gamma-glutamyl-phosphate reductase, found in Shewanella baltica (strain OS155 / ATCC BAA-1091).